We begin with the raw amino-acid sequence, 228 residues long: Flavin-dependent thymidylate synthase (228 aa).

In terms of domain architecture, ThyX spans 1 to 217; that stretch reads MEYKILDKGF…PWTFEAFLKF (217 aa). Residues Thr55, 78–80, and Glu86 contribute to the FAD site; that span reads RHR. Residues 75-78, 86-90, and Arg156 each bind dUMP; these read QWFR and EASLR. Residues 78–88 carry the ThyX motif motif; it reads RHRIGSFNEAS. FAD contacts are provided by residues 172–174 and Asn178; that span reads NAR. Residue Arg183 coordinates dUMP. Arg183 functions as the Involved in ionization of N3 of dUMP, leading to its activation in the catalytic mechanism.

It belongs to the thymidylate synthase ThyX family. As to quaternary structure, homotetramer. Requires FAD as cofactor.

The enzyme catalyses dUMP + (6R)-5,10-methylene-5,6,7,8-tetrahydrofolate + NADPH + H(+) = dTMP + (6S)-5,6,7,8-tetrahydrofolate + NADP(+). Its pathway is pyrimidine metabolism; dTTP biosynthesis. Functionally, catalyzes the reductive methylation of 2'-deoxyuridine-5'-monophosphate (dUMP) to 2'-deoxythymidine-5'-monophosphate (dTMP) while utilizing 5,10-methylenetetrahydrofolate (mTHF) as the methyl donor, and NADPH and FADH(2) as the reductant. In Thermosipho africanus (strain TCF52B), this protein is Flavin-dependent thymidylate synthase.